Reading from the N-terminus, the 173-residue chain is MPTVITHAAVPLCIGLGLGSKVIPPRLLFAGIILAMLPDADVLSFKFGVAYGNVFGHRGFTHSLVFAFVVPLLCVFIGRRWFRAGLIRCWLFLTVSLLSHSLLDSVTTGGKGVGWLWPWSDERFFAPWQVIKVAPFALSRYTTPYGHQVIISELMWVWLPGMLLMGMLWWRRR.

The Cytoplasmic portion of the chain corresponds to 1–12; the sequence is MPTVITHAAVPL. A helical membrane pass occupies residues 13–35; that stretch reads CIGLGLGSKVIPPRLLFAGIILA. Residues 36-54 lie on the Periplasmic side of the membrane; that stretch reads MLPDADVLSFKFGVAYGNV. Residues 55 to 77 traverse the membrane as a helical segment; sequence FGHRGFTHSLVFAFVVPLLCVFI. The Cytoplasmic segment spans residues 78-83; sequence GRRWFR. Residues 84–103 form a helical membrane-spanning segment; it reads AGLIRCWLFLTVSLLSHSLL. Residues 104–147 lie on the Periplasmic side of the membrane; sequence DSVTTGGKGVGWLWPWSDERFFAPWQVIKVAPFALSRYTTPYGH. Residues 148–170 traverse the membrane as a helical segment; it reads QVIISELMWVWLPGMLLMGMLWW. Topologically, residues 171-173 are cytoplasmic; it reads RRR.

It localises to the cell inner membrane. The chain is Inner membrane protein YbcI (ybcI) from Escherichia coli (strain K12).